The primary structure comprises 395 residues: 1-deoxy-D-xylulose 5-phosphate reductoisomerase (395 aa).

Residues T15, G16, S17, I18, G41, N43, and N126 each coordinate NADPH. Position 127 (K127) interacts with 1-deoxy-D-xylulose 5-phosphate. NADPH is bound at residue E128. D152 serves as a coordination point for Mn(2+). Positions 153, 154, 178, and 201 each coordinate 1-deoxy-D-xylulose 5-phosphate. E154 serves as a coordination point for Mn(2+). Residue G207 participates in NADPH binding. Residues S214, N219, K220, and E223 each contribute to the 1-deoxy-D-xylulose 5-phosphate site. A Mn(2+)-binding site is contributed by E223.

The protein belongs to the DXR family. The cofactor is Mg(2+). It depends on Mn(2+) as a cofactor.

The enzyme catalyses 2-C-methyl-D-erythritol 4-phosphate + NADP(+) = 1-deoxy-D-xylulose 5-phosphate + NADPH + H(+). It participates in isoprenoid biosynthesis; isopentenyl diphosphate biosynthesis via DXP pathway; isopentenyl diphosphate from 1-deoxy-D-xylulose 5-phosphate: step 1/6. Its function is as follows. Catalyzes the NADPH-dependent rearrangement and reduction of 1-deoxy-D-xylulose-5-phosphate (DXP) to 2-C-methyl-D-erythritol 4-phosphate (MEP). This chain is 1-deoxy-D-xylulose 5-phosphate reductoisomerase, found in Ruegeria pomeroyi (strain ATCC 700808 / DSM 15171 / DSS-3) (Silicibacter pomeroyi).